Reading from the N-terminus, the 537-residue chain is Phosphoenolpyruvate carboxykinase (ATP) (537 aa).

Residues R61, Y195, and K201 each contribute to the substrate site. ATP contacts are provided by residues K201, H220, and 236-244; that span reads GLSGTGKTT. Residues K201 and H220 each coordinate Mn(2+). Residue D257 coordinates Mn(2+). Positions 285, 323, and 448 each coordinate ATP. R323 provides a ligand contact to substrate.

This sequence belongs to the phosphoenolpyruvate carboxykinase (ATP) family. Mn(2+) is required as a cofactor.

It is found in the cytoplasm. The enzyme catalyses oxaloacetate + ATP = phosphoenolpyruvate + ADP + CO2. It functions in the pathway carbohydrate biosynthesis; gluconeogenesis. Its function is as follows. Involved in the gluconeogenesis. Catalyzes the conversion of oxaloacetate (OAA) to phosphoenolpyruvate (PEP) through direct phosphoryl transfer between the nucleoside triphosphate and OAA. In Azorhizobium caulinodans (strain ATCC 43989 / DSM 5975 / JCM 20966 / LMG 6465 / NBRC 14845 / NCIMB 13405 / ORS 571), this protein is Phosphoenolpyruvate carboxykinase (ATP).